Here is a 273-residue protein sequence, read N- to C-terminus: Diaminopimelate epimerase (273 aa).

Positions 11 and 60 each coordinate substrate. The Proton donor role is filled by C69. Substrate contacts are provided by residues 70–71 (GN), N181, and 199–200 (ER). C209 serves as the catalytic Proton acceptor. 210–211 (GT) contributes to the substrate binding site.

The protein belongs to the diaminopimelate epimerase family. Homodimer.

Its subcellular location is the cytoplasm. The catalysed reaction is (2S,6S)-2,6-diaminopimelate = meso-2,6-diaminopimelate. It functions in the pathway amino-acid biosynthesis; L-lysine biosynthesis via DAP pathway; DL-2,6-diaminopimelate from LL-2,6-diaminopimelate: step 1/1. In terms of biological role, catalyzes the stereoinversion of LL-2,6-diaminopimelate (L,L-DAP) to meso-diaminopimelate (meso-DAP), a precursor of L-lysine and an essential component of the bacterial peptidoglycan. The chain is Diaminopimelate epimerase from Helicobacter pylori (strain ATCC 700392 / 26695) (Campylobacter pylori).